The sequence spans 577 residues: CDPK-related kinase 7 (577 aa).

Residues 1–38 (MGLCHGKPIEQQSKNLPISNEIEETPKNSSQKAKSSGF) are disordered. G2 is lipidated: N-myristoyl glycine. The Protein kinase domain occupies 124–386 (YEIDGEVGRG…AAQALCHPWL (263 aa)). ATP is bound by residues 130-138 (VGRGHFGYT) and K156. Catalysis depends on D252, which acts as the Proton acceptor. S292 carries the phosphoserine modification. S334 is modified (phosphoserine; by CPK1, CPK10 and CPK34). The autoinhibitory domain stretch occupies residues 391–421 (ELKIPSDMIIYKLVKVYIMSSSLRKSALAAL). A calmodulin binding (CaMBD) region spans residues 410 to 430 (SSSLRKSALAALAKTLTVPQL). EF-hand domains lie at 428–464 (PQLT…STEA), 465–500 (TKDS…VYQL), 501–540 (EAME…GPSV), and 543–572 (HVVL…VSSR). 10 residues coordinate Ca(2+): S443, N445, Y447, K484, E489, D520, N522, E529, D554, and K556. Residue S558 is modified to Phosphoserine.

Belongs to the protein kinase superfamily. Ser/Thr protein kinase family. CDPK subfamily. Binds calmodulin (CaM) in a calcium-dependent manner. Post-translationally, autophosphorylated.

It is found in the membrane. The enzyme catalyses L-seryl-[protein] + ATP = O-phospho-L-seryl-[protein] + ADP + H(+). The catalysed reaction is L-threonyl-[protein] + ATP = O-phospho-L-threonyl-[protein] + ADP + H(+). Activated by calcium and calmodulin. Autophosphorylation may play an important role in the regulation of the kinase activity. May play a role in signal transduction pathways that involve calcium as a second messenger. This is CDPK-related kinase 7 (CRK7) from Arabidopsis thaliana (Mouse-ear cress).